A 202-amino-acid polypeptide reads, in one-letter code: Glycerol-3-phosphate acyltransferase (202 aa).

The next 4 membrane-spanning stretches (helical) occupy residues Ala-2–Val-22, Leu-80–Val-100, Ala-119–Phe-139, and Val-158–Ile-178.

It belongs to the PlsY family. Probably interacts with PlsX.

The protein resides in the cell inner membrane. It catalyses the reaction an acyl phosphate + sn-glycerol 3-phosphate = a 1-acyl-sn-glycero-3-phosphate + phosphate. It functions in the pathway lipid metabolism; phospholipid metabolism. Catalyzes the transfer of an acyl group from acyl-phosphate (acyl-PO(4)) to glycerol-3-phosphate (G3P) to form lysophosphatidic acid (LPA). This enzyme utilizes acyl-phosphate as fatty acyl donor, but not acyl-CoA or acyl-ACP. In Cupriavidus necator (strain ATCC 17699 / DSM 428 / KCTC 22496 / NCIMB 10442 / H16 / Stanier 337) (Ralstonia eutropha), this protein is Glycerol-3-phosphate acyltransferase.